We begin with the raw amino-acid sequence, 200 residues long: Insulin, isoform 2 (200 aa).

The interval 148-200 (EVDSSPQPQGSESLPAQPPAQPAPQPEPQQAREPSPEVSCCGLWPRRPQRSQN) is disordered. A compositionally biased stretch (pro residues) spans 163–174 (AQPPAQPAPQPE). Residues 175-184 (PQQAREPSPE) show a composition bias toward low complexity.

As to expression, expressed in pancreas, eye and, to a lower extent, in limb.

The sequence is that of Insulin, isoform 2 (INS-IGF2) from Homo sapiens (Human).